The following is a 186-amino-acid chain: Large ribosomal subunit protein uL5 (186 aa).

Belongs to the universal ribosomal protein uL5 family. Part of the 50S ribosomal subunit; contacts the 5S rRNA and probably tRNA. Forms a bridge to the 30S subunit in the 70S ribosome.

Functionally, this is one of the proteins that bind and probably mediate the attachment of the 5S RNA into the large ribosomal subunit, where it forms part of the central protuberance. In the 70S ribosome it contacts protein S13 of the 30S subunit (bridge B1b), connecting the 2 subunits; this bridge is implicated in subunit movement. May contact the P site tRNA; the 5S rRNA and some of its associated proteins might help stabilize positioning of ribosome-bound tRNAs. The protein is Large ribosomal subunit protein uL5 of Pyrococcus furiosus (strain ATCC 43587 / DSM 3638 / JCM 8422 / Vc1).